Consider the following 360-residue polypeptide: Probable ribonucleoside-diphosphate reductase small subunit 376L (360 aa).

Residues D67, E98, and H101 each contribute to the Fe cation site. The active site involves Y105. Residues E172, E206, and H209 each coordinate Fe cation.

Belongs to the ribonucleoside diphosphate reductase small chain family. In terms of assembly, heterotetramer composed of a homodimer of the large subunit (R1) and a homodimer of the small subunit (R2). Larger multisubunit protein complex are also active, composed of (R1)n(R2)n. Requires Fe cation as cofactor.

The catalysed reaction is a 2'-deoxyribonucleoside 5'-diphosphate + [thioredoxin]-disulfide + H2O = a ribonucleoside 5'-diphosphate + [thioredoxin]-dithiol. Its function is as follows. Ribonucleoside-diphosphate reductase holoenzyme provides the precursors necessary for viral DNA synthesis. Allows virus growth in non-dividing cells. Catalyzes the biosynthesis of deoxyribonucleotides from the corresponding ribonucleotides. The protein is Probable ribonucleoside-diphosphate reductase small subunit 376L of Acheta domesticus (House cricket).